We begin with the raw amino-acid sequence, 189 residues long: Bilin-binding protein (189 aa).

An N-terminal signal peptide occupies residues 1–15; the sequence is MQYLIVLALVAAASA. Intrachain disulfides connect Cys-23-Cys-130 and Cys-57-Cys-185.

It belongs to the calycin superfamily. Lipocalin family. Homotetramer. Hemolymph.

Its subcellular location is the secreted. Its function is as follows. This protein binds the blue pigments bilins. The chain is Bilin-binding protein from Pieris brassicae (White butterfly).